We begin with the raw amino-acid sequence, 262 residues long: Protein CUSTOS (262 aa).

Disordered regions lie at residues 1 to 79 and 126 to 262; these read MAAP…LQTT and FTSV…IPAN. Residues 9-18 show a composition bias toward low complexity; it reads SDSESSNSSS. The span at 51–61 shows a compositional bias: polar residues; the sequence is ANSQLSTSQPS. Residue serine 61 is modified to Phosphoserine. Threonine 79 carries the post-translational modification Phosphothreonine. Serine 138 is subject to Phosphoserine. Threonine 182 carries the phosphothreonine modification. The span at 188 to 199 shows a compositional bias: basic residues; the sequence is KKKRKLKKKAKK. Low complexity predominate over residues 200–209; that stretch reads VASVDSAVAA. A compositionally biased stretch (polar residues) spans 210–221; that stretch reads TTPTSMATVQKQ. Threonine 211 carries the post-translational modification Phosphothreonine. The Nucleolar localization signal (NLS) signature appears at 236 to 241; that stretch reads KKKKKA.

This sequence belongs to the CUSTOS family.

Its subcellular location is the nucleus envelope. Functionally, plays a role in the regulation of Wnt signaling pathway during early development. The chain is Protein CUSTOS from Homo sapiens (Human).